A 258-amino-acid polypeptide reads, in one-letter code: 1-(5-phosphoribosyl)-5-[(5-phosphoribosylamino)methylideneamino] imidazole-4-carboxamide isomerase (258 aa).

Residue Asp9 is the Proton acceptor of the active site. The active-site Proton donor is Asp131.

The protein belongs to the HisA/HisF family.

Its subcellular location is the cytoplasm. The catalysed reaction is 1-(5-phospho-beta-D-ribosyl)-5-[(5-phospho-beta-D-ribosylamino)methylideneamino]imidazole-4-carboxamide = 5-[(5-phospho-1-deoxy-D-ribulos-1-ylimino)methylamino]-1-(5-phospho-beta-D-ribosyl)imidazole-4-carboxamide. The protein operates within amino-acid biosynthesis; L-histidine biosynthesis; L-histidine from 5-phospho-alpha-D-ribose 1-diphosphate: step 4/9. This chain is 1-(5-phosphoribosyl)-5-[(5-phosphoribosylamino)methylideneamino] imidazole-4-carboxamide isomerase, found in Salinibacter ruber (strain DSM 13855 / M31).